We begin with the raw amino-acid sequence, 238 residues long: Ciliary microtubule associated protein 1B (238 aa).

The stretch at 182 to 207 (PGPCAYHVVNPMIYKTRAPQFTMLGR) is one STPGR repeat. The interval 206–238 (GRTLPPRENTKKPGPASYSVDKVVWSRGSRGRG) is disordered.

This sequence belongs to the CIMAP family.

The protein localises to the cell projection. Its subcellular location is the cilium. The protein resides in the flagellum. The protein is Ciliary microtubule associated protein 1B (Cimap1b) of Mus musculus (Mouse).